The primary structure comprises 232 residues: Ubiquinone biosynthesis O-methyltransferase (232 aa).

Arg36, Gly55, Asp76, and Met120 together coordinate S-adenosyl-L-methionine.

The protein belongs to the methyltransferase superfamily. UbiG/COQ3 family.

It carries out the reaction a 3-demethylubiquinol + S-adenosyl-L-methionine = a ubiquinol + S-adenosyl-L-homocysteine + H(+). It catalyses the reaction a 3-(all-trans-polyprenyl)benzene-1,2-diol + S-adenosyl-L-methionine = a 2-methoxy-6-(all-trans-polyprenyl)phenol + S-adenosyl-L-homocysteine + H(+). The protein operates within cofactor biosynthesis; ubiquinone biosynthesis. O-methyltransferase that catalyzes the 2 O-methylation steps in the ubiquinone biosynthetic pathway. The protein is Ubiquinone biosynthesis O-methyltransferase of Burkholderia lata (strain ATCC 17760 / DSM 23089 / LMG 22485 / NCIMB 9086 / R18194 / 383).